A 464-amino-acid chain; its full sequence is Chromosomal replication initiator protein DnaA (464 aa).

A domain I, interacts with DnaA modulators region spans residues 1–82; the sequence is MSLSLWQQCL…LLRFEVGSKP (82 aa). Positions 82–127 are domain II; the sequence is PPQMAVLQPASQHASEAPSQAAVARPRPSRPSWDNAPVQPELSYRS. The segment at 91–118 is disordered; the sequence is ASQHASEAPSQAAVARPRPSRPSWDNAP. The segment at 128 to 344 is domain III, AAA+ region; it reads NVNPKHNFDN…GALNRVIANA (217 aa). ATP-binding residues include glycine 172, glycine 174, lysine 175, and threonine 176. The interval 345-464 is domain IV, binds dsDNA; sequence NFTGRAITID…FSNLIRTLSS (120 aa).

This sequence belongs to the DnaA family. As to quaternary structure, oligomerizes as a right-handed, spiral filament on DNA at oriC.

Its subcellular location is the cytoplasm. Functionally, plays an essential role in the initiation and regulation of chromosomal replication. ATP-DnaA binds to the origin of replication (oriC) to initiate formation of the DNA replication initiation complex once per cell cycle. Binds the DnaA box (a 9 base pair repeat at the origin) and separates the double-stranded (ds)DNA. Forms a right-handed helical filament on oriC DNA; dsDNA binds to the exterior of the filament while single-stranded (ss)DNA is stabiized in the filament's interior. The ATP-DnaA-oriC complex binds and stabilizes one strand of the AT-rich DNA unwinding element (DUE), permitting loading of DNA polymerase. After initiation quickly degrades to an ADP-DnaA complex that is not apt for DNA replication. Binds acidic phospholipids. In Sodalis glossinidius (strain morsitans), this protein is Chromosomal replication initiator protein DnaA.